Reading from the N-terminus, the 256-residue chain is Imidazole glycerol phosphate synthase subunit HisF (256 aa).

Catalysis depends on residues Asp-13 and Asp-132.

It belongs to the HisA/HisF family. As to quaternary structure, heterodimer of HisH and HisF.

It is found in the cytoplasm. It carries out the reaction 5-[(5-phospho-1-deoxy-D-ribulos-1-ylimino)methylamino]-1-(5-phospho-beta-D-ribosyl)imidazole-4-carboxamide + L-glutamine = D-erythro-1-(imidazol-4-yl)glycerol 3-phosphate + 5-amino-1-(5-phospho-beta-D-ribosyl)imidazole-4-carboxamide + L-glutamate + H(+). It participates in amino-acid biosynthesis; L-histidine biosynthesis; L-histidine from 5-phospho-alpha-D-ribose 1-diphosphate: step 5/9. Functionally, IGPS catalyzes the conversion of PRFAR and glutamine to IGP, AICAR and glutamate. The HisF subunit catalyzes the cyclization activity that produces IGP and AICAR from PRFAR using the ammonia provided by the HisH subunit. The protein is Imidazole glycerol phosphate synthase subunit HisF of Leptospira borgpetersenii serovar Hardjo-bovis (strain JB197).